We begin with the raw amino-acid sequence, 99 residues long: Small integral membrane protein 14 (99 aa).

At 1–49 (MAEGGFDPCECVCSHEHAMRRLINLLRQSQSYCTDTECLQELPGPSGDN) the chain is on the lumenal side. A helical membrane pass occupies residues 50-70 (GISVTMILVAWMVIALILFLL). Residues 71–99 (RPPNLRGSSLPGKPTSPHNGQDPPAPPVD) are Cytoplasmic-facing. Positions 78-99 (SSLPGKPTSPHNGQDPPAPPVD) are disordered.

The protein resides in the endoplasmic reticulum membrane. The sequence is that of Small integral membrane protein 14 (SMIM14) from Homo sapiens (Human).